A 181-amino-acid polypeptide reads, in one-letter code: Large ribosomal subunit protein uL6 (181 aa).

This sequence belongs to the universal ribosomal protein uL6 family. Part of the 50S ribosomal subunit.

In terms of biological role, this protein binds to the 23S rRNA, and is important in its secondary structure. It is located near the subunit interface in the base of the L7/L12 stalk, and near the tRNA binding site of the peptidyltransferase center. The chain is Large ribosomal subunit protein uL6 from Synechococcus sp. (strain JA-2-3B'a(2-13)) (Cyanobacteria bacterium Yellowstone B-Prime).